A 654-amino-acid chain; its full sequence is Cysteine-rich receptor-like protein kinase 40 (654 aa).

The first 27 residues, 1–27, serve as a signal peptide directing secretion; the sequence is MGKCSALMIFLSSSLLLVLQTLHVVNA. 2 Gnk2-homologous domains span residues 28–131 and 143–250; these read VKCF…NQST and WPSP…LYSF. Residues 28 to 287 lie on the Extracellular side of the membrane; that stretch reads VKCFGNSFNG…VKKGKSIGYG (260 aa). N-linked (GlcNAc...) asparagine glycans are attached at residues asparagine 38, asparagine 65, asparagine 128, asparagine 154, asparagine 167, and asparagine 256. The chain crosses the membrane as a helical span at residues 288–308; it reads GIIAIVVVFTFINLLVFIGFI. The Cytoplasmic segment spans residues 309–654; sequence KVYARRGKLN…DDVFTELSCR (346 aa). In terms of domain architecture, Protein kinase spans 348–619; sequence FSSENTLGQG…VIIWLGSETI (272 aa). Residues 354 to 362 and lysine 376 each bind ATP; that span reads LGQGGFGTV. Tyrosine 421 bears the Phosphotyrosine mark. Residue aspartate 473 is the Proton acceptor of the active site. Residue serine 477 is modified to Phosphoserine. The residue at position 513 (threonine 513) is a Phosphothreonine. Residue tyrosine 521 is modified to Phosphotyrosine.

It belongs to the protein kinase superfamily. Ser/Thr protein kinase family. CRK subfamily.

It localises to the membrane. It catalyses the reaction L-seryl-[protein] + ATP = O-phospho-L-seryl-[protein] + ADP + H(+). The catalysed reaction is L-threonyl-[protein] + ATP = O-phospho-L-threonyl-[protein] + ADP + H(+). The polypeptide is Cysteine-rich receptor-like protein kinase 40 (CRK40) (Arabidopsis thaliana (Mouse-ear cress)).